A 151-amino-acid chain; its full sequence is Differentiation-associated protein 2 (151 aa).

The first 22 residues, 1–22, serve as a signal peptide directing secretion; sequence MKQIIRLITTLLLLSLIGITCA.

The protein resides in the endoplasmic reticulum. The protein localises to the vacuole. In terms of biological role, has an essential role in the initiation of differentiation. Also required for cAMP signaling. The chain is Differentiation-associated protein 2 (dia2) from Dictyostelium discoideum (Social amoeba).